A 143-amino-acid chain; its full sequence is Lutropin subunit beta (143 aa).

An N-terminal signal peptide occupies residues 1 to 22 (MEMLQGLLLLWLLLLNVGGVWT). Cystine bridges form between Cys-31–Cys-79, Cys-45–Cys-94, Cys-48–Cys-132, Cys-56–Cys-110, Cys-60–Cys-112, and Cys-115–Cys-122. Residue Asn-35 is glycosylated (N-linked (GlcNAc...) asparagine).

This sequence belongs to the glycoprotein hormones subunit beta family. As to quaternary structure, heterodimer of a common alpha chain and a unique beta chain which confers biological specificity to thyrotropin, lutropin, follitropin and gonadotropin.

The protein localises to the secreted. In terms of biological role, promotes spermatogenesis and ovulation by stimulating the testes and ovaries to synthesize steroids. This is Lutropin subunit beta (LHB) from Felis catus (Cat).